We begin with the raw amino-acid sequence, 581 residues long: Zinc finger protein 319 (581 aa).

Residues 1 to 22 (MSESWQQPPQTQPQQPQAPQPQ) are compositionally biased toward low complexity. Residues 1–39 (MSESWQQPPQTQPQQPQAPQPQHHAETPPALAEHTLPPG) are disordered. A C2H2-type 1 zinc finger spans residues 75 to 99 (PKCGVCGHDLAHLSSPHEHQCLAGH). The C2H2-type 2; degenerate zinc-finger motif lies at 103 to 125 (FQCTQCLKIFHQATDLLEHQCVQ). A Glycyl lysine isopeptide (Lys-Gly) (interchain with G-Cter in SUMO2) cross-link involves residue K129. 4 consecutive C2H2-type zinc fingers follow at residues 131 to 153 (FVCG…HSSH), 201 to 223 (YSCP…ERIH), 229 to 251 (YKCT…KRTH), and 257 to 279 (YKCA…MYAH). Position 280 is a phosphoserine (S280). The segment at 286 to 308 (FRCNVCELHFKESSELLQHPCTP) adopts a C2H2-type 7; degenerate zinc-finger fold. 3 C2H2-type zinc fingers span residues 314-336 (FRCG…ERTH), 342-364 (FKCD…RRTH), and 370-392 (FKCG…QHVH). The segment at 398 to 420 (FKCPVCQKGFDQSAELLRHKCLP) adopts a C2H2-type 11; degenerate zinc-finger fold. The segment at 427-449 (FKCPVCNKAYKRASALQKHQLSH) adopts a C2H2-type 12 zinc-finger fold. A C2H2-type 13; degenerate zinc finger spans residues 457–479 (LRCTLCERRFFSSSEFVQHRCDP). C2H2-type zinc fingers lie at residues 485-507 (LKCP…RRVH), 513-535 (YKCP…QGVH), and 541-563 (FKCV…SAQH).

The protein belongs to the krueppel C2H2-type zinc-finger protein family.

The protein localises to the nucleus. Functionally, may be involved in transcriptional regulation. This chain is Zinc finger protein 319 (Znf319), found in Mus musculus (Mouse).